A 324-amino-acid polypeptide reads, in one-letter code: Annexin A10 (324 aa).

Annexin repeat units lie at residues 17 to 88, 89 to 160, 171 to 243, and 247 to 318; these read FNPM…GLMY, PPPS…NLVQ, AMAA…AIVR, and DKPS…AICA.

The protein belongs to the annexin family.

In Mus musculus (Mouse), this protein is Annexin A10 (Anxa10).